Here is a 160-residue protein sequence, read N- to C-terminus: 2-C-methyl-D-erythritol 2,4-cyclodiphosphate synthase (160 aa).

2 residues coordinate a divalent metal cation: D11 and H13. 4-CDP-2-C-methyl-D-erythritol 2-phosphate contacts are provided by residues D11–H13 and H37–S38. H45 is a binding site for a divalent metal cation. 4-CDP-2-C-methyl-D-erythritol 2-phosphate-binding positions include D59–G61, F64–D68, A103–A109, T135–E138, F142, and R145.

The protein belongs to the IspF family. As to quaternary structure, homotrimer. A divalent metal cation serves as cofactor.

It catalyses the reaction 4-CDP-2-C-methyl-D-erythritol 2-phosphate = 2-C-methyl-D-erythritol 2,4-cyclic diphosphate + CMP. It participates in isoprenoid biosynthesis; isopentenyl diphosphate biosynthesis via DXP pathway; isopentenyl diphosphate from 1-deoxy-D-xylulose 5-phosphate: step 4/6. Functionally, involved in the biosynthesis of isopentenyl diphosphate (IPP) and dimethylallyl diphosphate (DMAPP), two major building blocks of isoprenoid compounds. Catalyzes the conversion of 4-diphosphocytidyl-2-C-methyl-D-erythritol 2-phosphate (CDP-ME2P) to 2-C-methyl-D-erythritol 2,4-cyclodiphosphate (ME-CPP) with a corresponding release of cytidine 5-monophosphate (CMP). The protein is 2-C-methyl-D-erythritol 2,4-cyclodiphosphate synthase of Thiobacillus denitrificans (strain ATCC 25259 / T1).